The sequence spans 446 residues: tRNA-2-methylthio-N(6)-dimethylallyladenosine synthase (446 aa).

The region spanning 8–124 (KTYRVKSFGC…LPGMIDAAVA (117 aa)) is the MTTase N-terminal domain. [4Fe-4S] cluster is bound by residues C17, C53, C87, C160, C164, and C167. The Radical SAM core domain maps to 146–378 (RKSAPSAFLT…QAALNRDQAA (233 aa)). The 62-residue stretch at 381-442 (AGSVGRTCEV…PNSLAGQLLE (62 aa)) folds into the TRAM domain.

The protein belongs to the methylthiotransferase family. MiaB subfamily. In terms of assembly, monomer. [4Fe-4S] cluster is required as a cofactor.

The protein resides in the cytoplasm. The catalysed reaction is N(6)-dimethylallyladenosine(37) in tRNA + (sulfur carrier)-SH + AH2 + 2 S-adenosyl-L-methionine = 2-methylsulfanyl-N(6)-dimethylallyladenosine(37) in tRNA + (sulfur carrier)-H + 5'-deoxyadenosine + L-methionine + A + S-adenosyl-L-homocysteine + 2 H(+). Its function is as follows. Catalyzes the methylthiolation of N6-(dimethylallyl)adenosine (i(6)A), leading to the formation of 2-methylthio-N6-(dimethylallyl)adenosine (ms(2)i(6)A) at position 37 in tRNAs that read codons beginning with uridine. The protein is tRNA-2-methylthio-N(6)-dimethylallyladenosine synthase of Erythrobacter litoralis (strain HTCC2594).